Reading from the N-terminus, the 597-residue chain is Gamma-terpinene synthase, chloroplastic (597 aa).

The transit peptide at 1–47 directs the protein to the chloroplast; it reads MATLSMQVSILNKQLKNLNSFGMRASKLPLVARRVDVSTTRLRPICS. Positions 350 and 354 each coordinate Mn(2+). The short motif at 350-354 is the DDXXD motif element; that stretch reads DDVYD. 2 homodimerization regions span residues 356–362 and 428–464; these read YGTLDEL and EAKW…YFTL. The Mn(2+) site is built by Asp494 and Glu502.

It belongs to the terpene synthase family. As to quaternary structure, homodimer. Mn(2+) serves as cofactor. Requires Mg(2+) as cofactor.

It localises to the plastid. It is found in the chloroplast. It catalyses the reaction (2E)-geranyl diphosphate = gamma-terpinene + diphosphate. It participates in secondary metabolite biosynthesis; terpenoid biosynthesis. In terms of biological role, involved in the biosynthesis of phenolic monoterpenes natural products thymol and carvacrol which have a broad range of biological activities acting as antimicrobial compounds, insecticides, antioxidants and pharmaceutical agents. Monoterpene synthase which catalyzes the conversion of geranyl diphosphate (GPP) to gamma-terpinene and minor amounts of other monoterpenes (e.g. alpha-thujene, alpha-terpinene, myrcene, sabinene, (+)-R-limonene, alpha-pinene and alpha-phellandrene). The sequence is that of Gamma-terpinene synthase, chloroplastic from Thymus caespititius (Cretan thyme).